A 1712-amino-acid polypeptide reads, in one-letter code: Latent-transforming growth factor beta-binding protein 1 (1712 aa).

Positions 1–20 are cleaved as a signal peptide; it reads MAGAWLRWGLLLWAGLLAWS. Residues 63–148 form a disordered region; it reads SSTATSSRSL…QDTQSSGGSR (86 aa). Over residues 136–147 the composition is skewed to polar residues; that stretch reads KVQQDTQSSGGS. Positions 181 to 213 constitute an EGF-like 1 domain; it reads TKPSCVPPCQNGGMCLRPQFCVCKPGTKGKACE. 3 disulfide bridges follow: cysteine 185-cysteine 195, cysteine 189-cysteine 201, and cysteine 203-cysteine 212. N-linked (GlcNAc...) asparagine glycans are attached at residues asparagine 339 and asparagine 370. An EGF-like 2 domain is found at 391-423; sequence RVVICHLPCMNGGQCSSRDKCQCPPNFTGKLCQ. Intrachain disulfides connect cysteine 395-cysteine 405, cysteine 399-cysteine 411, cysteine 413-cysteine 422, cysteine 551-cysteine 573, cysteine 560-cysteine 586, and cysteine 574-cysteine 589. N-linked (GlcNAc...) asparagine glycosylation occurs at asparagine 416. A TB 1 domain is found at 549–601; the sequence is GRCFQETIGSQCGKALPGLSKQEDCCGTVGTSWGFNKCQKCPKKQSYHGYTQM. An N-linked (GlcNAc...) asparagine glycan is attached at asparagine 612. One can recognise an EGF-like 3; calcium-binding domain in the interval 618–658; the sequence is DINECQLQGVCPNGECLNTMGSYRCSCKMGFGPDPTFSSCV. 7 disulfides stabilise this stretch: cysteine 622-cysteine 633, cysteine 628-cysteine 642, cysteine 644-cysteine 657, cysteine 671-cysteine 694, cysteine 681-cysteine 706, cysteine 695-cysteine 709, and cysteine 696-cysteine 721. A glycan (O-linked (Glc) serine) is linked at serine 639. The 53-residue stretch at 669 to 721 folds into the TB 2 domain; the sequence is GPCYRLVSPGRQCMHPLSVHLTKQICCCSVGKAWGPQCEKCPLPGTAAFKEIC. The disordered stretch occupies residues 752–803; sequence KNTQPVAKSTHPPPLPAKEEPVEALTSSREHGPGVAEPEVVTAPPEKEIPSL. O-linked (GalNAc...) threonine glycosylation is found at threonine 761 and threonine 793. In terms of domain architecture, EGF-like 4; calcium-binding spans 865 to 906; the sequence is EINECTVNPDICGAGHCINLPVRYTCICYEGYKFSEQQRKCI. 37 disulfide bridges follow: cysteine 869–cysteine 881, cysteine 876–cysteine 890, cysteine 892–cysteine 905, cysteine 911–cysteine 923, cysteine 918–cysteine 932, cysteine 934–cysteine 947, cysteine 953–cysteine 964, cysteine 959–cysteine 973, cysteine 976–cysteine 988, cysteine 994–cysteine 1005, cysteine 1000–cysteine 1014, cysteine 1017–cysteine 1028, cysteine 1034–cysteine 1045, cysteine 1040–cysteine 1054, cysteine 1056–cysteine 1069, cysteine 1075–cysteine 1086, cysteine 1081–cysteine 1095, cysteine 1097–cysteine 1110, cysteine 1116–cysteine 1127, cysteine 1122–cysteine 1136, cysteine 1138–cysteine 1151, cysteine 1157–cysteine 1169, cysteine 1164–cysteine 1178, cysteine 1180–cysteine 1192, cysteine 1198–cysteine 1210, cysteine 1204–cysteine 1219, cysteine 1221–cysteine 1234, cysteine 1240–cysteine 1252, cysteine 1246–cysteine 1261, cysteine 1263–cysteine 1276, cysteine 1282–cysteine 1294, cysteine 1289–cysteine 1303, cysteine 1305–cysteine 1319, cysteine 1340–cysteine 1363, cysteine 1350–cysteine 1375, cysteine 1364–cysteine 1380, and cysteine 1365–cysteine 1392. The EGF-like 5; calcium-binding domain occupies 907-948; that stretch reads DIDECAQAQHLCSQGRCENTEGSFLCICPAGFIASEEGSNCI. Serine 929 carries O-linked (Glc) serine glycosylation. The region spanning 949–989 is the EGF-like 6; calcium-binding domain; the sequence is DVDECLRPDVCRDGRCINTAGAFRCEYCDSGYRMSRRGHCE. Asparagine 966 is subject to (3R)-3-hydroxyasparagine. The EGF-like 7; calcium-binding domain maps to 990-1029; sequence DIDECLTPSTCPEEQCVNSPGSYQCVPCTEGFRGWNGQCL. O-linked (Glc) serine glycosylation occurs at serine 1011. The 41-residue stretch at 1030-1070 folds into the EGF-like 8; calcium-binding domain; that stretch reads DVDECLQPKVCTNGSCTNLEGSYMCSCHKGYSPTPDHRHCQ. Asparagine 1042 carries an N-linked (GlcNAc...) asparagine glycan. The O-linked (Glc) serine glycan is linked to serine 1051. The 41-residue stretch at 1071–1111 folds into the EGF-like 9; calcium-binding domain; that stretch reads DIDECQQGNLCMNGQCKNTDGSFRCTCGQGYQLSAAKDQCE. The 41-residue stretch at 1112–1152 folds into the EGF-like 10; calcium-binding domain; sequence DIDECEHRHLCSHGQCRNTEGSFQCLCNQGYRASVLGDHCE. A (3R)-3-hydroxyasparagine modification is found at asparagine 1129. O-linked (Glc) serine glycosylation is present at serine 1133. In terms of domain architecture, EGF-like 11; calcium-binding spans 1153–1193; sequence DINECLEDSSVCQGGDCINTAGSYDCTCPDGLQLNDNKGCQ. In terms of domain architecture, EGF-like 12; calcium-binding spans 1194–1235; it reads DINECAQPGLCAPHGECLNTQGSFHCVCEQGFSISADGRTCE. A glycan (O-linked (Glc) serine) is linked at serine 1216. The region spanning 1236-1277 is the EGF-like 13; calcium-binding domain; that stretch reads DIDECVNNTVCDSHGFCDNTAGSFRCLCYQGFQAPQDGQGCV. A glycan (N-linked (GlcNAc...) asparagine) is linked at asparagine 1242. The region spanning 1278–1320 is the EGF-like 14; calcium-binding domain; the sequence is DVNECELLSGVCGEAFCENVEGSFLCVCADENQEYSPMTGQCR. An 8-Cys3 region region spans residues 1335 to 1402; it reads EEKKECYYNL…PRGKGFVPAG (68 aa). The TB 3 domain occupies 1338–1392; that stretch reads KECYYNLNDASLCDNVLAPNVTKQECCCTSGAGWGDNCEIFPCPVQGTAEFSEMC. Residue asparagine 1357 is glycosylated (N-linked (GlcNAc...) asparagine). Serine 1405 carries the post-translational modification Phosphoserine. The EGF-like 15; calcium-binding domain maps to 1415-1457; that stretch reads DADECLLFGEEICKNGYCLNTQPGYECYCKEGTYYDPVKLQCF. 10 disulfide bridges follow: cysteine 1419/cysteine 1432, cysteine 1427/cysteine 1441, cysteine 1443/cysteine 1456, cysteine 1462/cysteine 1473, cysteine 1468/cysteine 1482, cysteine 1484/cysteine 1497, cysteine 1517/cysteine 1541, cysteine 1527/cysteine 1553, cysteine 1542/cysteine 1556, and cysteine 1543/cysteine 1568. Positions 1458-1498 constitute an EGF-like 16; calcium-binding domain; sequence DMDECQDPNSCIDGQCVNTEGSYNCFCTHPMVLDASEKRCV. A glycan (O-linked (Glc) serine) is linked at serine 1479. Positions 1498–1712 are C-terminal domain; it reads VQPTESNEQI…LNLDKDSDLE (215 aa). One can recognise a TB 4 domain in the interval 1515–1568; sequence DLCWEHLSEEYVCSRPLVGKQTTYTECCCLYGEAWGMQCALCPMKDSDDYAQLC. 2 positions are modified to phosphoserine: serine 1588 and serine 1607. The EGF-like 17 domain maps to 1612–1652; it reads QAEECGILNGCENGRCVRVQEGYTCDCFDGYHLDMAKMTCV. Intrachain disulfides connect cysteine 1616–cysteine 1627, cysteine 1622–cysteine 1636, cysteine 1638–cysteine 1651, cysteine 1657–cysteine 1672, cysteine 1667–cysteine 1681, and cysteine 1683–cysteine 1696. In terms of domain architecture, EGF-like 18; calcium-binding spans 1653–1697; sequence DVNECSELNNRMSLCKNAKCINTEGSYKCVCLPGYVPSDKPNYCT. The O-linked (Glc) serine glycan is linked to serine 1678.

The protein belongs to the LTBP family. As to quaternary structure, interacts with TGFB1; associates via disulfide bonds with the Latency-associated peptide chain (LAP) regulatory chain of TGFB1, leading to regulate activation of TGF-beta-1. LTBP1 does not bind directly to TGF-beta-1, the active chain of TGFB1. Interacts (via C-terminal domain) with FBN1 (via N-terminal domain). Interacts with FBN2. Interacts with ADAMTSL2. Interacts with EFEMP2. In terms of processing, contains hydroxylated asparagine residues. Post-translationally, two intrachain disulfide bonds from the TB3 domain are rearranged upon TGFB1 binding, and form interchain bonds with TGFB1 propeptide, anchoring it to the extracellular matrix. O-glycosylated on serine residues by POGLUT2 and POGLUT3.

Its subcellular location is the secreted. The protein localises to the extracellular space. It localises to the extracellular matrix. Key regulator of transforming growth factor beta (TGFB1, TGFB2 and TGFB3) that controls TGF-beta activation by maintaining it in a latent state during storage in extracellular space. Associates specifically via disulfide bonds with the Latency-associated peptide (LAP), which is the regulatory chain of TGF-beta, and regulates integrin-dependent activation of TGF-beta. Outcompeted by LRRC32/GARP for binding to LAP regulatory chain of TGF-beta. In Rattus norvegicus (Rat), this protein is Latent-transforming growth factor beta-binding protein 1 (Ltbp1).